A 378-amino-acid chain; its full sequence is Probable pectin lyase A (378 aa).

The N-terminal stretch at 1–19 (MKFPAFITAIISIASLSSA) is a signal peptide. Cystine bridges form between C82–C101 and C91–C225. R255 is a catalytic residue. The cysteines at positions 321 and 329 are disulfide-linked.

Belongs to the polysaccharide lyase 1 family.

The protein localises to the secreted. The enzyme catalyses Eliminative cleavage of (1-&gt;4)-alpha-D-galacturonan methyl ester to give oligosaccharides with 4-deoxy-6-O-methyl-alpha-D-galact-4-enuronosyl groups at their non-reducing ends.. Pectinolytic enzymes consist of four classes of enzymes: pectin lyase, polygalacturonase, pectin methylesterase and rhamnogalacturonase. Among pectinolytic enzymes, pectin lyase is the most important in depolymerization of pectin, since it cleaves internal glycosidic bonds of highly methylated pectins. The polypeptide is Probable pectin lyase A (pelA) (Aspergillus terreus (strain NIH 2624 / FGSC A1156)).